The primary structure comprises 163 residues: Type VII secretion system protein EsaG (163 aa).

Interacts with EssD (via C-terminus). Interacts with EssE.

Its subcellular location is the cytoplasm. In terms of biological role, component of the type VII secretion system (Ess). Also acts as part of toxin-antitoxin system. Counteracts the toxic effect of EssD via direct interaction. In Staphylococcus aureus (strain NCTC 8325 / PS 47), this protein is Type VII secretion system protein EsaG.